The primary structure comprises 374 residues: 2-aminoethylphosphonate--pyruvate transaminase 1 (374 aa).

Lysine 195 is modified (N6-(pyridoxal phosphate)lysine).

It belongs to the class-V pyridoxal-phosphate-dependent aminotransferase family. PhnW subfamily. As to quaternary structure, homodimer. Pyridoxal 5'-phosphate serves as cofactor.

The catalysed reaction is (2-aminoethyl)phosphonate + pyruvate = phosphonoacetaldehyde + L-alanine. Involved in phosphonate degradation. The chain is 2-aminoethylphosphonate--pyruvate transaminase 1 from Polaromonas sp. (strain JS666 / ATCC BAA-500).